Reading from the N-terminus, the 155-residue chain is Ribosomal RNA large subunit methyltransferase H (155 aa).

S-adenosyl-L-methionine is bound by residues I71, G103, and 122 to 127 (FGRMVW).

This sequence belongs to the RNA methyltransferase RlmH family. In terms of assembly, homodimer.

Its subcellular location is the cytoplasm. It catalyses the reaction pseudouridine(1915) in 23S rRNA + S-adenosyl-L-methionine = N(3)-methylpseudouridine(1915) in 23S rRNA + S-adenosyl-L-homocysteine + H(+). Functionally, specifically methylates the pseudouridine at position 1915 (m3Psi1915) in 23S rRNA. The chain is Ribosomal RNA large subunit methyltransferase H from Cereibacter sphaeroides (strain ATCC 17025 / ATH 2.4.3) (Rhodobacter sphaeroides).